Consider the following 85-residue polypeptide: uncharacterized protein (85 aa).

Disordered regions lie at residues 1-28 (MPQK…LRKA) and 35-54 (SKKK…SLTE). The segment covering 35–48 (SKKKSLQHLKKLKK) has biased composition (basic residues).

It localises to the nucleus. This is an uncharacterized protein from Saccharomyces cerevisiae (strain ATCC 204508 / S288c) (Baker's yeast).